The chain runs to 367 residues: Peptide chain release factor 2 (367 aa).

Gln254 bears the N5-methylglutamine mark.

This sequence belongs to the prokaryotic/mitochondrial release factor family. In terms of processing, methylated by PrmC. Methylation increases the termination efficiency of RF2.

Its subcellular location is the cytoplasm. In terms of biological role, peptide chain release factor 2 directs the termination of translation in response to the peptide chain termination codons UGA and UAA. The protein is Peptide chain release factor 2 of Burkholderia cenocepacia (strain ATCC BAA-245 / DSM 16553 / LMG 16656 / NCTC 13227 / J2315 / CF5610) (Burkholderia cepacia (strain J2315)).